Consider the following 296-residue polypeptide: MATMAHANTSHPLYVAGMAGNTNHMSPWGEDAHKRWLAALGPSSLRGPFAWQTCPQQRHPHQPDVSGPPGSGFGEQPSQDTPNPMFGATGPHQQHNFPSHPYAAHNSKEAHEAWLKVYQSVWGNTKHAGAWSGPWSPAAGGRQHHMSGGGGGGGPRWMGGPMPWTQCDETKKSFTPDIDVVETPESYSVQASLPGAKKEDVKVSWDPSTYELRIEGVVSRSVGNDEEGEKKTEQSGRFSLRERQTGKFCRTVYLGSQVDGDKIEEGGLSAGMDDGVLRIAVPRQGSGKGVKEITIV.

The segment at 50-83 is disordered; it reads AWQTCPQQRHPHQPDVSGPPGSGFGEQPSQDTPN. In terms of domain architecture, sHSP spans 169–296; that stretch reads ETKKSFTPDI…GKGVKEITIV (128 aa).

The protein belongs to the small heat shock protein (HSP20) family.

In terms of biological role, monooxygenase; part of the ergochrome gene cluster responsible for the typical purple-black color of the ergot sclerotia. The ergochrome gene cluster produces several ergot pigments including the yellow ergochrome secalonic acid and its derivatives, as well as the red anthraquinones endocrocin and clavorubin. The pathway begins with the synthesis of atrochrysone thioester by the polyketide synthase (PKS) CPUR_05437. The atrochrysone carboxyl ACP thioesterase CPUR_05436 then breaks the thioester bond and releases the atrochrysone carboxylic acid from CPUR_05437. The atrochrysone carboxylic acid is then converted to atrochrysone which is further transformed into emodin anthrone. The next step is performed by the anthrone oxygenase CPUR_05434 that catalyzes the oxidation of emodinanthrone to emodin. Emodin is further modified to yield monodictyphenone via several steps involving CPUR_05427, CPUR_05428, CPUR_05429 and CPUR_05430. The short chain dehydrogenase/reductase CPUR_05418 then catalyzes the C-5 ketoreduction to give the xanthone skeleton of the monomeric units. Ergochromes formation requires further dimerization steps of different xanthone units, probably catalyzed by the cytochrome P450 monooxygenase CPUR_05419. CPUR_05425, CPUR_05426 and CPUR_05431 are unique to Claviceps, thus it is likely that they are involved in further modification of xanthone units or in their dimerization. The yellow ergochromes and the red anthraquinone pigments endocrocin and clavorubin are products from the same PKS derived precursors and the latter are likely shunt products in the pathway of xanthone biosynthesis. It is proposed that atrochrysone carboxylic acid released from the PKS CPUR_05437 can also be converted to endocrocin anthrone which is further oxidized into endocrocin by CPUR_05435. Endocrocin could be then modified to clavorubin, possibly by CPUR_05423 and CPUR_05431. Clavorubin is the principal anthraquinone metabolite produced by the cluster with a much higher yield compared to endocrocin. The chain is SHSP domain-containing protein CPUR_05420 from Claviceps purpurea (strain 20.1) (Ergot fungus).